Reading from the N-terminus, the 239-residue chain is Fatty acid metabolism regulator protein (239 aa).

Positions 6-74 constitute an HTH gntR-type domain; sequence QSPAGFAEEY…HGKPTKVNNF (69 aa). Residues 34-53 constitute a DNA-binding region (H-T-H motif); that stretch reads ERELSELIGVTRTTLREVLQ.

Homodimer.

It is found in the cytoplasm. Its function is as follows. Multifunctional regulator of fatty acid metabolism. This Salmonella paratyphi C (strain RKS4594) protein is Fatty acid metabolism regulator protein.